Here is a 244-residue protein sequence, read N- to C-terminus: Phosphoadenosine 5'-phosphosulfate reductase (244 aa).

The active-site Nucleophile; cysteine thiosulfonate intermediate is the C239.

This sequence belongs to the PAPS reductase family. CysH subfamily.

The protein resides in the cytoplasm. It catalyses the reaction [thioredoxin]-disulfide + sulfite + adenosine 3',5'-bisphosphate + 2 H(+) = [thioredoxin]-dithiol + 3'-phosphoadenylyl sulfate. The protein operates within sulfur metabolism; hydrogen sulfide biosynthesis; sulfite from sulfate: step 3/3. Catalyzes the formation of sulfite from phosphoadenosine 5'-phosphosulfate (PAPS) using thioredoxin as an electron donor. The protein is Phosphoadenosine 5'-phosphosulfate reductase of Salmonella agona (strain SL483).